A 102-amino-acid polypeptide reads, in one-letter code: MFAIIKTGGKQYKVSEGDIIKVEKIEAEAGDKIEFDQVLMVAGDDVKVGSPVVEGAKVSAEVLDQKKDKKIVIFKFKAKKNYRKKKGHRQPYTLVKIEKIDA.

It belongs to the bacterial ribosomal protein bL21 family. As to quaternary structure, part of the 50S ribosomal subunit. Contacts protein L20.

This protein binds to 23S rRNA in the presence of protein L20. The chain is Large ribosomal subunit protein bL21 from Finegoldia magna (strain ATCC 29328 / DSM 20472 / WAL 2508) (Peptostreptococcus magnus).